The sequence spans 549 residues: Probable amidase (549 aa).

Residues lysine 132 and serine 209 each act as charge relay system in the active site. Catalysis depends on serine 233, which acts as the Acyl-ester intermediate.

This sequence belongs to the amidase family.

It catalyses the reaction a monocarboxylic acid amide + H2O = a monocarboxylate + NH4(+). This Saccharomyces cerevisiae (strain ATCC 204508 / S288c) (Baker's yeast) protein is Probable amidase (AMD2).